Here is a 662-residue protein sequence, read N- to C-terminus: Hypoxia-inducible factor 3-alpha (662 aa).

The disordered stretch occupies residues 1–25 (MDWDQDRSSTELRKEKSRDAARSRR). Positions 12–65 (LRKEKSRDAARSRRSQETEVLYQLAHTLPFARGVSAHLDKASIMRLTISYLRMH) constitute a bHLH domain. Residues 75-98 (QVRKEGEPLDACYLKALEGFVMVL) form a nuclear localization signal region. PAS domains lie at 80 to 150 (GEPL…PSLS) and 225 to 295 (PHPA…LSKG). Positions 228–272 (ASLEPPLGRGAFLSRHSLDMKFTYCDERIAEVAGYSPDDLIGCSA) are nuclear export signal. Positions 352 to 379 (EQTEQHTRRPPQLGTSSKKGIPGNSLDP) are disordered. The LRRLL signature appears at 410–413 (LRRL). Disordered regions lie at residues 417–445 (ILDG…ADLP) and 459–480 (STAR…PDTP). Residues 421 to 433 (PPTAATPSTPQAA) are compositionally biased toward low complexity. An ODD region spans residues 448 to 581 (LAVGLENAHR…SEDKGLELLE (134 aa)). The tract at residues 450 to 501 (VGLENAHRLSTARKNKTMETDLDIAQDPDTPDLEMLAPYISMDDDFQLNSSE) is NTAD. A Glycyl lysine isopeptide (Lys-Gly) (interchain with G-Cter in ubiquitin) cross-link involves residue Lys463. Acidic residues predominate over residues 469 to 480 (TDLDIAQDPDTP). Positions 485–492 (LAPYISMD) match the LAPYISMD motif. The residue at position 487 (Pro487) is a 4-hydroxyproline. A disordered region spans residues 500–595 (SEQLPKVHRR…KRSPRLEPGS (96 aa)). A compositionally biased stretch (basic residues) spans 505 to 521 (KVHRRPPRTARRPRARS). Lys565 is covalently cross-linked (Glycyl lysine isopeptide (Lys-Gly) (interchain with G-Cter in ubiquitin)). Over residues 572–584 (SEDKGLELLETKP) the composition is skewed to basic and acidic residues.

As to quaternary structure, interacts with ARNT, BAD, BCL2L2, EPAS1, HIF1A, MCL1 and VHL. Post-translationally, in normoxia, hydroxylated on Pro-487 in the oxygen-dependent degradation domain (ODD) by PHD. The hydroxylated proline promotes interaction with VHL, initiating rapid ubiquitination and subsequent proteasomal degradation. Ubiquitinated; ubiquitination occurs in a VHL- and oxygen-dependent pathway and subsequently targeted for proteasomal degradation. As to expression, expressed in the perivenous zone of the liver. Expressed in all tissues examined during normoxia. Expressed in brain and lung. Expressed in periportal and perivenous hepatocytes and in endothelial cells of the central vein (at protein level). Highest expression seen in the cerebral cortex, hippocampus, and lung. Low expression in myocardial tissue and liver.

The protein localises to the nucleus. The protein resides in the cytoplasm. Its subcellular location is the nucleus speckle. It localises to the mitochondrion. Functionally, acts as a transcriptional regulator in adaptive response to low oxygen tension. Attenuates the ability of transcription factor HIF1A, EPAS1 and the HIF1A-ARNT complex to bind to hypoxia-responsive elements (HRE) located within the enhancer/promoter of hypoxia-inducible target genes and hence inhibits HRE-driven transcriptional activation. Functions as an inhibitor of angiogenesis in hypoxic cells of the cornea. Plays a role in the development of the cardiorespiratory system. May also be involved in apoptosis. May act as a tumor suppressor. This is Hypoxia-inducible factor 3-alpha from Rattus norvegicus (Rat).